Consider the following 504-residue polypeptide: Trifunctional (S)-stylopine synthase/(S)-nandinine synthase/(S)-canadine synthase (504 aa).

A helical transmembrane segment spans residues 16-36 (SSTTTTTTILLSLLFTIFIIL). Cys-448 is a binding site for heme.

It belongs to the cytochrome P450 family. Heme is required as a cofactor. As to expression, expressed in roots and at lower levels in stems, leaves and plantlets.

Its subcellular location is the endoplasmic reticulum membrane. The enzyme catalyses (S)-cheilanthifoline + reduced [NADPH--hemoprotein reductase] + O2 = (S)-stylopine + oxidized [NADPH--hemoprotein reductase] + 2 H2O + H(+). It catalyses the reaction (S)-tetrahydrocolumbamine + reduced [NADPH--hemoprotein reductase] + O2 = (S)-canadine + oxidized [NADPH--hemoprotein reductase] + 2 H2O + H(+). The catalysed reaction is (S)-scoulerine + reduced [NADPH--hemoprotein reductase] + O2 = (S)-nandinine + oxidized [NADPH--hemoprotein reductase] + 2 H2O + H(+). Methylenedioxy bridge-forming cytochrome P450 involved in the biosynthesis of isoquinoline alkaloids. Converts (S)-cheilanthifoline to (S)-stylopine, (S)-scoulerine to (S)-nandinine and (S)-tetrahydrocolumbamine to (S)-canadine. Can be involved in both sanguinarine and berberine biosynthesis. Catalyzes an oxidative reaction that does not incorporate oxygen into the product. In Argemone mexicana (Mexican prickly poppy), this protein is Trifunctional (S)-stylopine synthase/(S)-nandinine synthase/(S)-canadine synthase.